The primary structure comprises 274 residues: Sulfur carrier protein FdhD (274 aa).

Cys-121 serves as the catalytic Cysteine persulfide intermediate. 258–263 (FSKPGR) is a binding site for Mo-bis(molybdopterin guanine dinucleotide).

Belongs to the FdhD family.

Its subcellular location is the cytoplasm. Functionally, required for formate dehydrogenase (FDH) activity. Acts as a sulfur carrier protein that transfers sulfur from IscS to the molybdenum cofactor prior to its insertion into FDH. The protein is Sulfur carrier protein FdhD of Yersinia pseudotuberculosis serotype O:1b (strain IP 31758).